The following is a 114-amino-acid chain: Probable acid stress chaperone HdeA (114 aa).

Residues 1-26 (MIKALFNKNTALAAVAILALSGGAMA) form the signal peptide. Residues cysteine 46 and cysteine 94 are joined by a disulfide bond.

This sequence belongs to the HdeA family.

The protein localises to the periplasm. Functionally, required for optimal acid stress protection. Exhibits a chaperone-like activity only at low pH by suppressing non-specifically the aggregation of denaturated periplasmic proteins. Contributes to acid resistance. Not required for wild-type virulence in the BALB/c mouse model. The sequence is that of Probable acid stress chaperone HdeA from Brucella abortus (strain 2308).